The chain runs to 285 residues: Mitochondrial substrate carrier family protein S (285 aa).

The Mitochondrial intermembrane segment spans residues 1–9 (MSTERGLKD). 3 Solcar repeats span residues 4-87 (ERGL…MKVL), 96-183 (LTVG…CKRY), and 197-283 (LNLP…VIKL). The chain crosses the membrane as a helical span at residues 10 to 30 (SIAGTVAGAACLFTGHPFDTI). The Mitochondrial matrix portion of the chain corresponds to 31–61 (RVRLQTSNTPIGIMECFRNTIKYEGFSGLYK). Residues 62 to 82 (GVTSPLFGMMFETAVLFAGYG) traverse the membrane as a helical segment. Over 83-101 (QMKVLLQKDENTPLTVGQC) the chain is Mitochondrial intermembrane. The helical transmembrane segment at 102 to 122 (AIAGGFAGVGASVVLTPVELV) threads the bilayer. Residues 123 to 150 (KCRLQVQTTGPQKYKGSLDCLVQILKEG) lie on the Mitochondrial matrix side of the membrane. The chain crosses the membrane as a helical span at residues 151-172 (GIRGAYRGFTPTIAREFVGNMA). Residues 173–199 (FFSTYETCKRYFKNKENKPNDDDELNL) lie on the Mitochondrial intermembrane side of the membrane. The helical transmembrane segment at 200–220 (PALIISGGLGGMAYWTVLYPV) threads the bilayer. Topologically, residues 221-258 (DVAKSKIQISEGAGPSPSIVKVLKEIYSKEGVKGLFRG) are mitochondrial matrix. Residues 259-277 (YTPTIIRSFPANAAMFSVY) traverse the membrane as a helical segment. Topologically, residues 278–285 (ELVIKLLG) are mitochondrial intermembrane.

It belongs to the mitochondrial carrier (TC 2.A.29) family.

It is found in the mitochondrion inner membrane. Mitochondrial solute carriers shuttle metabolites, nucleotides, and cofactors through the mitochondrial inner membrane. Mediates the transport of acylcarnitines of different length across the mitochondrial inner membrane from the cytosol to the mitochondrial matrix for their oxidation by the mitochondrial fatty acid-oxidation pathway. The polypeptide is Mitochondrial substrate carrier family protein S (mcfS) (Dictyostelium discoideum (Social amoeba)).